Here is a 406-residue protein sequence, read N- to C-terminus: MIPLNRRASQTRGGMEYFDARRKPHNVGKVIAALVLTTLCIFILKQSPGFGGSSVFSRHEPGVTHVLVTGGAGYIGSHASLRLLKDNYRVTIVDNLSRGNMGAVKVLQELFPQPGRLQFIYADLGDQKTVNKIFAENAFDAVMHFAAVAYVGESTLEPLRYYHNITSNTLLILEAMASHGVKTLIYSSTCATYGEPEKMPIVETTRQLPINPYGKAKKMAEDIILDFTKGRKDMAVMILRYFNVIGSDPEGRLGEAPRPELREHGRISGACFDAALGIIPGLKVKGTDYPTTDGTCIRDYIDVTDLVDAHVKALNKAEPSKVGIYNVGTGRGRSVKEFVDACKKATGVNIKIEYLSRRPGDYAEVYSDPTKINTELNWTAQYTDLKESLSVAWRWQKSHPRGYGSN.

Residues 1-26 (MIPLNRRASQTRGGMEYFDARRKPHN) lie on the Cytoplasmic side of the membrane. The chain crosses the membrane as a helical; Signal-anchor for type II membrane protein span at residues 27-44 (VGKVIAALVLTTLCIFIL). Residues 45-406 (KQSPGFGGSS…KSHPRGYGSN (362 aa)) lie on the Lumenal side of the membrane. 65–96 (HVLVTGGAGYIGSHASLRLLKDNYRVTIVDNL) contributes to the NAD(+) binding site. Tyr213 (proton acceptor) is an active-site residue.

Belongs to the NAD(P)-dependent epimerase/dehydratase family. It depends on NAD(+) as a cofactor.

Its subcellular location is the golgi apparatus. It localises to the golgi stack membrane. It carries out the reaction UDP-beta-L-arabinopyranose = UDP-alpha-D-xylose. It participates in nucleotide-sugar biosynthesis; UDP-L-arabinose biosynthesis; UDP-L-arabinose from UDP-alpha-D-xylose: step 1/1. Its pathway is cell wall biogenesis; cell wall polysaccharide biosynthesis. This Oryza sativa subsp. japonica (Rice) protein is Probable UDP-arabinose 4-epimerase 3 (UEL-3).